We begin with the raw amino-acid sequence, 795 residues long: uncharacterized protein (795 aa).

Residues 228–280 (NIICFKNKCKNNEKEKKEEEEDHDHDHDDKKKEKEDKEKEEEEEEEDSNDDFE) are a coiled coil. Disordered regions lie at residues 242–278 (EKKE…SNDD), 326–430 (TTTT…TPNR), 455–484 (INQQ…KSEP), and 673–743 (NNNN…NENE). Residues 251–264 (DHDHDDKKKEKEDK) show a composition bias toward basic and acidic residues. Residues 265–278 (EKEEEEEEEDSNDD) show a composition bias toward acidic residues. Residues 326–345 (TTTTTVNGSKNSSNTTTPIT) show a composition bias toward low complexity. Residues 362–373 (DDDDDDDLTDED) are compositionally biased toward acidic residues. Over residues 377–398 (HNEIYSTSPKVSHSTFCQSSPT) the composition is skewed to polar residues. 3 stretches are compositionally biased toward low complexity: residues 399-414 (LLDL…QQQQ), 455-480 (INQQ…SSNI), and 673-729 (NNNN…NQNE). A compositionally biased stretch (basic and acidic residues) spans 732–743 (NENKNENENENE).

This is an uncharacterized protein from Dictyostelium discoideum (Social amoeba).